The sequence spans 196 residues: Dephospho-CoA kinase (196 aa).

The 191-residue stretch at 6 to 196 folds into the DPCK domain; it reads AIALTGGIGT…QVERFLKTLL (191 aa). An ATP-binding site is contributed by 14–19; that stretch reads GTGKST.

Belongs to the CoaE family.

It is found in the cytoplasm. The enzyme catalyses 3'-dephospho-CoA + ATP = ADP + CoA + H(+). It functions in the pathway cofactor biosynthesis; coenzyme A biosynthesis; CoA from (R)-pantothenate: step 5/5. Catalyzes the phosphorylation of the 3'-hydroxyl group of dephosphocoenzyme A to form coenzyme A. This is Dephospho-CoA kinase from Helicobacter pylori (strain J99 / ATCC 700824) (Campylobacter pylori J99).